We begin with the raw amino-acid sequence, 270 residues long: Cytochrome c oxidase subunit 3 (270 aa).

Helical transmembrane passes span 22–42, 46–66, 88–108, 128–148, 168–188, 205–225, and 248–268; these read PWPIVVSFSLLSLALSLGLTM, IGEMYLVNLALLVVLGSGVLW, INIGFLLFVLSEVLIFSALFW, VGITAVQPTELPLLNTIILLA, SLSGLLITTWLIIIFVICQYI, VFFAGTGLHFLHMVMLAIMLA, and IIYLHVLDVIWLFLYIVFYWW.

This sequence belongs to the cytochrome c oxidase subunit 3 family. In terms of assembly, component of the cytochrome c oxidase (complex IV, CIV), a multisubunit enzyme composed of a catalytic core of 3 subunits and several supernumerary subunits. The complex exists as a monomer or a dimer and forms supercomplexes (SCs) in the inner mitochondrial membrane with ubiquinol-cytochrome c oxidoreductase (cytochrome b-c1 complex, complex III, CIII).

Its subcellular location is the mitochondrion inner membrane. It catalyses the reaction 4 Fe(II)-[cytochrome c] + O2 + 8 H(+)(in) = 4 Fe(III)-[cytochrome c] + 2 H2O + 4 H(+)(out). In terms of biological role, component of the cytochrome c oxidase, the last enzyme in the mitochondrial electron transport chain which drives oxidative phosphorylation. The respiratory chain contains 3 multisubunit complexes succinate dehydrogenase (complex II, CII), ubiquinol-cytochrome c oxidoreductase (cytochrome b-c1 complex, complex III, CIII) and cytochrome c oxidase (complex IV, CIV), that cooperate to transfer electrons derived from NADH and succinate to molecular oxygen, creating an electrochemical gradient over the inner membrane that drives transmembrane transport and the ATP synthase. Cytochrome c oxidase is the component of the respiratory chain that catalyzes the reduction of oxygen to water. Electrons originating from reduced cytochrome c in the intermembrane space (IMS) are transferred via the dinuclear copper A center (CU(A)) of subunit 2 and heme A of subunit 1 to the active site in subunit 1, a binuclear center (BNC) formed by heme A3 and copper B (CU(B)). The BNC reduces molecular oxygen to 2 water molecules using 4 electrons from cytochrome c in the IMS and 4 protons from the mitochondrial matrix. This chain is Cytochrome c oxidase subunit 3 (COX3), found in Vanderwaltozyma polyspora (strain ATCC 22028 / DSM 70294 / BCRC 21397 / CBS 2163 / NBRC 10782 / NRRL Y-8283 / UCD 57-17) (Kluyveromyces polysporus).